Here is a 408-residue protein sequence, read N- to C-terminus: Peptidase T (408 aa).

H78 is a binding site for Zn(2+). D80 is a catalytic residue. D140 provides a ligand contact to Zn(2+). E173 serves as the catalytic Proton acceptor. Positions 174, 196, and 379 each coordinate Zn(2+).

Belongs to the peptidase M20B family. Zn(2+) serves as cofactor.

Its subcellular location is the cytoplasm. The enzyme catalyses Release of the N-terminal residue from a tripeptide.. Its function is as follows. Cleaves the N-terminal amino acid of tripeptides. The polypeptide is Peptidase T (Citrobacter koseri (strain ATCC BAA-895 / CDC 4225-83 / SGSC4696)).